A 90-amino-acid polypeptide reads, in one-letter code: Small ribosomal subunit protein bS16 (90 aa).

It belongs to the bacterial ribosomal protein bS16 family.

The protein is Small ribosomal subunit protein bS16 of Streptococcus pneumoniae (strain Hungary19A-6).